We begin with the raw amino-acid sequence, 215 residues long: UPF0502 protein YceH (215 aa).

At Lys-80 the chain carries N6-acetyllysine.

It belongs to the UPF0502 family.

This Escherichia coli (strain K12 / MC4100 / BW2952) protein is UPF0502 protein YceH.